Reading from the N-terminus, the 315-residue chain is Ribosomal protein L11 methyltransferase (315 aa).

S-adenosyl-L-methionine is bound by residues Thr-163, Gly-184, Asp-206, and Asn-248.

This sequence belongs to the methyltransferase superfamily. PrmA family.

It is found in the cytoplasm. It catalyses the reaction L-lysyl-[protein] + 3 S-adenosyl-L-methionine = N(6),N(6),N(6)-trimethyl-L-lysyl-[protein] + 3 S-adenosyl-L-homocysteine + 3 H(+). Functionally, methylates ribosomal protein L11. In Lacticaseibacillus paracasei (strain ATCC 334 / BCRC 17002 / CCUG 31169 / CIP 107868 / KCTC 3260 / NRRL B-441) (Lactobacillus paracasei), this protein is Ribosomal protein L11 methyltransferase.